The primary structure comprises 399 residues: Transaminase BacF (399 aa).

Pyridoxal 5'-phosphate-binding positions include 103–104 (GK), Tyr-128, Asn-178, Tyr-209, and 236–238 (SFS). An N6-(pyridoxal phosphate)lysine modification is found at Lys-239. Residue Arg-247 participates in pyridoxal 5'-phosphate binding.

This sequence belongs to the class-I pyridoxal-phosphate-dependent aminotransferase family. In terms of assembly, homodimer. Requires pyridoxal 5'-phosphate as cofactor.

The protein localises to the cytoplasm. The protein operates within antibiotic biosynthesis; bacilysin biosynthesis. In terms of biological role, part of the bacABCDEF operon responsible for the biosynthesis of the nonribosomally synthesized dipeptide antibiotic bacilysin, composed of L-alanine and L-anticapsin. Bacilysin is an irreversible inactivator of the glutaminase domain of glucosamine synthetase. Catalyzes the reductive amination of the C2 ketone of tetrahydro-hydroxyphenylpyruvate (H4HPP), with L-Phe as an amino donor, to yield tetrahydrotyrosine (H4Tyr) diastereomer. D-Phe is not an effective amino donor. BacF associated to BacG converts 3E,7R- and 3Z,7R-ex-H2HPP to 2S,4R,7R- and 2S,4S,7R-H4Tyr, respectively. Given that bacilysin has the 2S,4S stereochemistry in its anticapsin moiety, it is likely that the 2S,4S-H4Tyr is the diastereomer used for the biosynthesis. The polypeptide is Transaminase BacF (Bacillus subtilis (strain 168)).